A 368-amino-acid chain; its full sequence is Regulatory protein E2 (368 aa).

Residues 1 to 207 (MKMQTPKESL…NVIDCNDSMC (207 aa)) are transactivation domain. Over residues 227-236 (STSTPKTASV) the composition is skewed to polar residues. Positions 227–251 (STSTPKTASVGTPKPHIQTPATKRP) are disordered. A DNA-binding domain region spans residues 290-368 (TTPIIHLKGD…VQISVGYMTI (79 aa)). Lys-297 participates in a covalent cross-link: Glycyl lysine isopeptide (Lys-Gly) (interchain with G-Cter in SUMO).

This sequence belongs to the papillomaviridae E2 protein family. As to quaternary structure, binds DNA as homodimer. Interacts with protein E1; this interaction greatly increases E1 DNA-binding activity. Interacts with protein L1; this interaction enhances E2-dependent replication and transcription activation. Interacts with protein L2; this interaction inhibits E2 transcriptional activity but not DNA replication function E2. Interacts with protein E7; this interaction inhibits E7 oncogenic activity. Interacts with host TAF1; this interaction modulates E2-dependent transcriptional regulation. Interacts with host BRD4; this interaction mediates E2 transcriptional activation function. Additionally, the interaction with host BRD4 on mitotic chromosomes mediates tethering of the viral genome. Interacts with host TOPBP1; this interaction is required for optimal viral DNA replication. Phosphorylated. In terms of processing, sumoylation plays a regulatory role in E2 transcriptional activity.

It is found in the host nucleus. Functionally, plays a role in the initiation of viral DNA replication. A dimer of E2 interacts with a dimer of E1 in order to improve specificity of E1 DNA binding activity. Once the complex recognizes and binds DNA at specific sites, the E2 dimer is removed from DNA. E2 also regulates viral transcription through binding to the E2RE response element (5'-ACCNNNNNNGGT-3') present in multiple copies in the regulatory regions of the viral genome. Activates or represses transcription depending on E2RE's position with regards to proximal promoter elements including the TATA-box. Repression occurs by sterically hindering the assembly of the transcription initiation complex. The chain is Regulatory protein E2 from Human papillomavirus 45.